The sequence spans 393 residues: MKIFLCLIAVVFLQGVVGFHVEREYAWKNISYEGVDPALFNIDNIIPTGFVHDAINKKIFIAVPRRSPQIPFTLTELDTTKHPERSPPLSKFPGSDKLINVYQPVIDECRRLWIADVGRVDYKGDEQKYPNQNAVLIAYDLTKENYPEIHRYEIPSKIAGSNTIPFGGFAVDVTNPKEGCGKTFVYITNFEDNTLIVYDQEKKDSWKISHGSFKPEHDSTLSHDGKQYKYRVGLFGITLGDRDPEGNRPAYYIAGSSTKLFEISTKILKEKGAKFDPVNLGNRGPHTEAVALVYDPKTKVIFFAESDSRQVSCWNTQKPLNHKNTDVIFASAKFIYGSDISVDSESQLWFLSTGHPPIPNLKLTFDKPHIRLMRVDTAKAIRRTRCEVKPRKP.

Residues 1-18 form the signal peptide; that stretch reads MKIFLCLIAVVFLQGVVG. N-linked (GlcNAc...) asparagine glycosylation occurs at N29.

It belongs to the major royal jelly protein family. Female salivary gland (at protein level).

The protein resides in the secreted. Its function is as follows. Probably modulates blood feeding of sand flies on vertebrate species by binding and sequestering different mediators involved in the host response. Binds biogenic amines. Binds serotonin with high affinity. Poorly binds histamine. Does not bind dopamine, noradrenaline, adrenaline and octopamine. This chain is Yellow-related salivary protein SP03B, found in Phlebotomus perniciosus (Phlebotomine sand fly).